Reading from the N-terminus, the 172-residue chain is 3-hydroxydecanoyl-[acyl-carrier-protein] dehydratase (172 aa).

His71 is a catalytic residue.

The protein belongs to the thioester dehydratase family. FabA subfamily. In terms of assembly, homodimer.

The protein localises to the cytoplasm. It catalyses the reaction a (3R)-hydroxyacyl-[ACP] = a (2E)-enoyl-[ACP] + H2O. The catalysed reaction is (3R)-hydroxydecanoyl-[ACP] = (2E)-decenoyl-[ACP] + H2O. The enzyme catalyses (2E)-decenoyl-[ACP] = (3Z)-decenoyl-[ACP]. It participates in lipid metabolism; fatty acid biosynthesis. Functionally, necessary for the introduction of cis unsaturation into fatty acids. Catalyzes the dehydration of (3R)-3-hydroxydecanoyl-ACP to E-(2)-decenoyl-ACP and then its isomerization to Z-(3)-decenoyl-ACP. Can catalyze the dehydratase reaction for beta-hydroxyacyl-ACPs with saturated chain lengths up to 16:0, being most active on intermediate chain length. In Yersinia pseudotuberculosis serotype O:1b (strain IP 31758), this protein is 3-hydroxydecanoyl-[acyl-carrier-protein] dehydratase.